We begin with the raw amino-acid sequence, 294 residues long: 4-hydroxy-tetrahydrodipicolinate synthase (294 aa).

Residue Thr-45 coordinates pyruvate. The Proton donor/acceptor role is filled by Tyr-133. Catalysis depends on Lys-161, which acts as the Schiff-base intermediate with substrate. Ile-203 serves as a coordination point for pyruvate.

The protein belongs to the DapA family. In terms of assembly, homotetramer; dimer of dimers.

It localises to the cytoplasm. The enzyme catalyses L-aspartate 4-semialdehyde + pyruvate = (2S,4S)-4-hydroxy-2,3,4,5-tetrahydrodipicolinate + H2O + H(+). It participates in amino-acid biosynthesis; L-lysine biosynthesis via DAP pathway; (S)-tetrahydrodipicolinate from L-aspartate: step 3/4. In terms of biological role, catalyzes the condensation of (S)-aspartate-beta-semialdehyde [(S)-ASA] and pyruvate to 4-hydroxy-tetrahydrodipicolinate (HTPA). This Shewanella frigidimarina (strain NCIMB 400) protein is 4-hydroxy-tetrahydrodipicolinate synthase.